The sequence spans 474 residues: Glutamate--tRNA ligase (474 aa).

The short motif at 9-19 (PSPTGYLHVGG) is the 'HIGH' region element. Residues 240–244 (KLSKR) carry the 'KMSKS' region motif. Lys243 provides a ligand contact to ATP.

It belongs to the class-I aminoacyl-tRNA synthetase family. Glutamate--tRNA ligase type 1 subfamily. In terms of assembly, monomer.

The protein localises to the cytoplasm. It carries out the reaction tRNA(Glu) + L-glutamate + ATP = L-glutamyl-tRNA(Glu) + AMP + diphosphate. Its function is as follows. Catalyzes the attachment of glutamate to tRNA(Glu) in a two-step reaction: glutamate is first activated by ATP to form Glu-AMP and then transferred to the acceptor end of tRNA(Glu). The polypeptide is Glutamate--tRNA ligase (Aliivibrio fischeri (strain ATCC 700601 / ES114) (Vibrio fischeri)).